A 302-amino-acid polypeptide reads, in one-letter code: Gap junction delta-2 protein (302 aa).

Residues 1 to 19 (MGEWTILERLLEAAVQQHS) are Cytoplasmic-facing. A helical membrane pass occupies residues 20 to 42 (TMIGRILLTVVVIFRILVVAIVG). Topologically, residues 43–75 (ETVYDDEQTMFVCNTLQPGCNQACYDKAFPISH) are extracellular. A helical transmembrane segment spans residues 76–98 (IRYWVFQIIMVCTPSLCFITYSV). Topologically, residues 99 to 177 (HQSSKQRERQ…KIRRQEGISR (79 aa)) are cytoplasmic. Residues 178–200 (FYIIQVVFRNALEIGFLMGQYFL) form a helical membrane-spanning segment. The Extracellular portion of the chain corresponds to 201 to 232 (YGFKVPSMYECNRYPCVKMVECYVSRPTEKTV). Residues 233 to 255 (FLVFMFAVSGLCVILNLAELNHL) traverse the membrane as a helical segment. Topologically, residues 256-302 (GWRKIKTAVRGAQERRKSIYEIRNKDSPHRIGVPNFGRTQSSDSAYV) are cytoplasmic.

The protein belongs to the connexin family. Delta-type subfamily. A connexon is composed of a hexamer of connexins. In terms of tissue distribution, retinal specific.

The protein localises to the cell membrane. It is found in the cell junction. The protein resides in the gap junction. Functionally, one gap junction consists of a cluster of closely packed pairs of transmembrane channels, the connexons, through which materials of low MW diffuse from one cell to a neighboring cell. The polypeptide is Gap junction delta-2 protein (Leucoraja erinaceus (Little skate)).